A 510-amino-acid polypeptide reads, in one-letter code: NKAP family protein (510 aa).

The segment covering 1–22 (MSHRERDRDRDRDSDRDRDRNR) has biased composition (basic and acidic residues). 3 disordered regions span residues 1-128 (MSHR…VEIQ), 149-220 (ERKD…NYNG), and 239-401 (VYER…PISE). The span at 23-39 (YSRSRSRGSRSRSRSRS) shows a compositional bias: basic residues. Basic and acidic residues predominate over residues 40–89 (RSRDRNRNRDYNKDRSSNRDSYYNDRDYKKDRSSNRDRDYYDRDRNRDYK). The segment covering 96-105 (SSGGGGGGSG) has biased composition (gly residues). Low complexity-rich tracts occupy residues 112 to 123 (SSSYRESNSNNS) and 184 to 219 (NNNNRNYHGGNSRYVNNNNNNNNNNYNNNNNKSNYN). Positions 262–273 (NKKKSKKSRRKS) are enriched in basic residues. Residues 274-283 (SSNSDSSSSD) are compositionally biased toward low complexity. Positions 292 to 322 (REKRKKSKSRKDKKKRKEKKKHQRKSSKRSS) are enriched in basic residues. Basic and acidic residues predominate over residues 342–351 (DSDRSDSEGR). The segment covering 352–367 (SRKKRSKKRSKKRHDH) has biased composition (basic residues). Residues 368-383 (HKESVHDASMWEEKVE) are compositionally biased toward basic and acidic residues.

It belongs to the NKAP family.

In Dictyostelium discoideum (Social amoeba), this protein is NKAP family protein.